Consider the following 293-residue polypeptide: Homoserine kinase (293 aa).

ATP is bound at residue 84 to 94; it reads PLSRGLGSSSA.

It belongs to the GHMP kinase family. Homoserine kinase subfamily.

It localises to the cytoplasm. It carries out the reaction L-homoserine + ATP = O-phospho-L-homoserine + ADP + H(+). The protein operates within amino-acid biosynthesis; L-threonine biosynthesis; L-threonine from L-aspartate: step 4/5. Catalyzes the ATP-dependent phosphorylation of L-homoserine to L-homoserine phosphate. This is Homoserine kinase from Nautilia profundicola (strain ATCC BAA-1463 / DSM 18972 / AmH).